Reading from the N-terminus, the 90-residue chain is Acylphosphatase (90 aa).

The Acylphosphatase-like domain maps to 3–88; it reads TWHMTAHGRV…GKFEDFDLRP (86 aa). Residues arginine 18 and asparagine 36 contribute to the active site.

This sequence belongs to the acylphosphatase family.

The enzyme catalyses an acyl phosphate + H2O = a carboxylate + phosphate + H(+). The polypeptide is Acylphosphatase (acyP) (Cupriavidus pinatubonensis (strain JMP 134 / LMG 1197) (Cupriavidus necator (strain JMP 134))).